A 435-amino-acid polypeptide reads, in one-letter code: Cell adhesion molecule 2 (435 aa).

The N-terminal stretch at 1 to 24 is a signal peptide; it reads MIWKRSAVLRFYSVCGLLLLGSQG. The Extracellular segment spans residues 25–367; the sequence is QFPLTQNVTV…SLAGQNGPDH (343 aa). In terms of domain architecture, Ig-like V-type spans 27-119; it reads PLTQNVTVVE…PVKTSKAYLT (93 aa). N-linked (GlcNAc...) asparagine glycans are attached at residues N31 and N51. 3 disulfides stabilise this stretch: C44–C104, C146–C203, and C248–C296. 2 consecutive Ig-like C2-type domains span residues 127-219 and 227-312; these read PQIS…VAMQ and PSVK…YVLI. N-linked (GlcNAc...) asparagine glycosylation occurs at N291. The span at 341 to 351 shows a compositional bias: low complexity; that stretch reads TTSPSTSASSS. Residues 341–360 form a disordered region; the sequence is TTSPSTSASSSSRRDPNSLA. Residues 368-388 form a helical membrane-spanning segment; the sequence is ALIGGIVAVVVFVTLCSIFLL. Over 389-435 the chain is Cytoplasmic; sequence GRYLARHKGTYLTNEAKGAEDAPDADTAIINAEGSQVNAEEKKEYFI. At S423 the chain carries Phosphoserine.

The protein belongs to the nectin family. In terms of processing, glycosylation at Asn-51 reduces adhesive binding.

It localises to the cell membrane. The protein localises to the synapse. The protein resides in the cell projection. It is found in the axon. Its function is as follows. Adhesion molecule that engages in homo- and heterophilic interactions with the other nectin-like family members, leading to cell aggregation. Important for synapse organization, providing regulated trans-synaptic adhesion. Preferentially binds to oligodendrocytes. This Rattus norvegicus (Rat) protein is Cell adhesion molecule 2 (Cadm2).